Reading from the N-terminus, the 449-residue chain is Phosphoglucosamine mutase (449 aa).

Ser-101 (phosphoserine intermediate) is an active-site residue. 4 residues coordinate Mg(2+): Ser-101, Asp-241, Asp-243, and Asp-245. Ser-101 is modified (phosphoserine).

It belongs to the phosphohexose mutase family. Mg(2+) serves as cofactor. Activated by phosphorylation.

The catalysed reaction is alpha-D-glucosamine 1-phosphate = D-glucosamine 6-phosphate. Functionally, catalyzes the conversion of glucosamine-6-phosphate to glucosamine-1-phosphate. This is Phosphoglucosamine mutase from Acetivibrio thermocellus (strain ATCC 27405 / DSM 1237 / JCM 9322 / NBRC 103400 / NCIMB 10682 / NRRL B-4536 / VPI 7372) (Clostridium thermocellum).